A 574-amino-acid chain; its full sequence is Glycine--tRNA ligase (574 aa).

Residues Arg96 and Glu162 each coordinate substrate. ATP is bound by residues 194 to 196 (RNE), 204 to 209 (IRLREF), 327 to 328 (EC), and 450 to 453 (GIDR). Position 209–213 (209–213 (FTQAE)) interacts with substrate. 446 to 450 (EPSYG) is a substrate binding site.

It belongs to the class-II aminoacyl-tRNA synthetase family.

The protein resides in the cytoplasm. The catalysed reaction is tRNA(Gly) + glycine + ATP = glycyl-tRNA(Gly) + AMP + diphosphate. Functionally, catalyzes the attachment of glycine to tRNA(Gly). This is Glycine--tRNA ligase from Methanococcus maripaludis (strain C6 / ATCC BAA-1332).